The sequence spans 91 residues: Early E3B 10.4 kDa protein (91 aa).

The signal sequence occupies residues 1-21 (MVTVLLIFLCLPVIFSSSTFA). Residues 22 to 33 (AVSDLDPECLAP) are Lumenal-facing. Residues 34 to 56 (FAVYLIFTFVTATCVCSIITLLI) traverse the membrane as a helical segment. The Cytoplasmic portion of the chain corresponds to 57–91 (TSLQFFDYYYVRIVYRRHHPRYQNPQIAALLQLQP).

Belongs to the adenoviridae E3B family.

It is found in the host endoplasmic reticulum membrane. In terms of biological role, down-regulates the EGF receptor. This chain is Early E3B 10.4 kDa protein, found in Homo sapiens (Human).